The following is a 172-amino-acid chain: Putative Dresden prostate carcinoma protein 2 (172 aa).

The interval 40-61 (QCEEEEAMTPRPTKARAPLPSA) is disordered.

In terms of tissue distribution, very high expression in prostate and prostate cancer. Faint expression in other tissues.

This chain is Putative Dresden prostate carcinoma protein 2 (HMGN2P46), found in Homo sapiens (Human).